A 656-amino-acid chain; its full sequence is PAN2-PAN3 deadenylation complex subunit PAN3 (656 aa).

Residues 15–44 (SFKGTQCRNIIIHGYCKFENEGCQFNHGNS) form a C3H1-type zinc finger. The tract at residues 71-104 (KTSSSFTPGKSPAVRSPDFSSLPAFQPGAPVNDQ) is disordered. The PABPC-interacting motif-2 (PAM-2) motif lies at 128-148 (AFAPSFNPYASESFTPSVSAG). The interval 271 to 525 (QVFPRGSLPD…NIEDFTKLFS (255 aa)) is pseudokinase domain. ATP is bound by residues Arg-325, 375–382 (DYYPQSQS), and 428–429 (KK). Residues 526–564 (HKVLSVVNSLQYNSEYLEQQLSRELENARLFRLMCKLNA) adopt a coiled-coil conformation. Residues 565-656 (IYGRLESRID…IDSTFRALTQ (92 aa)) form a knob domain region.

Belongs to the protein kinase superfamily. PAN3 family. Homodimer. Forms a heterotrimer with a catalytic subunit PAN2 to form the poly(A)-nuclease (PAN) deadenylation complex. Interacts (via PAM-2 motif) with poly(A)-binding protein PAB1 (via PABC domain), conferring substrate specificity of the enzyme complex.

The protein localises to the cytoplasm. Regulatory subunit of the poly(A)-nuclease (PAN) deadenylation complex, one of two cytoplasmic mRNA deadenylases involved in mRNA turnover. PAN specifically shortens poly(A) tails of RNA and the activity is stimulated by poly(A)-binding protein PAB1. PAN deadenylation is followed by rapid degradation of the shortened mRNA tails by the CCR4-NOT complex. Deadenylated mRNAs are then degraded by two alternative mechanisms, namely exosome-mediated 3'-5' exonucleolytic degradation, or deadenylation-dependent mRNA decaping and subsequent 5'-3' exonucleolytic degradation by XRN1. May also be involved in post-transcriptional maturation of mRNA poly(A) tails. PAN3 acts as a positive regulator for PAN activity, recruiting the catalytic subunit PAN2 to mRNA via its interaction with RNA and with PAB1. The sequence is that of PAN2-PAN3 deadenylation complex subunit PAN3 from Kluyveromyces lactis (strain ATCC 8585 / CBS 2359 / DSM 70799 / NBRC 1267 / NRRL Y-1140 / WM37) (Yeast).